The following is a 530-amino-acid chain: Type 2 DNA topoisomerase 6 subunit B (530 aa).

ATP-binding positions include Asn42, Asp76, 97–98, 106–113, and Lys427; these read SK and GMYGLGVK.

The protein belongs to the TOP6B family. In terms of assembly, homodimer. Heterotetramer of two Top6A and two Top6B chains.

It catalyses the reaction ATP-dependent breakage, passage and rejoining of double-stranded DNA.. Relaxes both positive and negative superturns and exhibits a strong decatenase activity. This is Type 2 DNA topoisomerase 6 subunit B from Saccharolobus solfataricus (strain ATCC 35092 / DSM 1617 / JCM 11322 / P2) (Sulfolobus solfataricus).